We begin with the raw amino-acid sequence, 122 residues long: uncharacterized protein (122 aa).

Positions 46–116 form a coiled coil; that stretch reads KDLQKEVDDL…HQLENKRELN (71 aa).

This is an uncharacterized protein from Invertebrate iridescent virus 6 (IIV-6).